Here is a 452-residue protein sequence, read N- to C-terminus: Nuclear distribution protein nudF 2 (452 aa).

Positions 76 to 101 form a coiled coil; it reads ALQILDLESKVAGLQAELSSLTLTSR. 7 WD repeats span residues 123 to 164, 166 to 206, 210 to 250, 253 to 292, 295 to 355, 357 to 396, and 401 to 449; these read SHRD…RTLK, HIRA…ANIR, GHDH…CVKV, SSDAWIRDISSSFDGKWLVAGGRDQAVTVWEVATAEQKSA, GHEN…IKTL, GHDNWVRDLVFHPNGKHLISVADDKTIRCWDLSQEGKLVK, and AHSH…SCVR.

This sequence belongs to the WD repeat LIS1/nudF family. As to quaternary structure, self-associates. Interacts with nudE and dynein.

The protein localises to the cytoplasm. The protein resides in the cytoskeleton. It is found in the spindle pole. Functionally, positively regulates the activity of the minus-end directed microtubule motor protein dynein. May enhance dynein-mediated microtubule sliding by targeting dynein to the microtubule plus end. Required for nuclear migration during vegetative growth as well as development. Required for retrograde early endosome (EE) transport from the hyphal tip. Required for localization of dynein to the mitotic spindle poles. Recruits additional proteins to the dynein complex at SPBs. The protein is Nuclear distribution protein nudF 2 of Talaromyces marneffei (strain ATCC 18224 / CBS 334.59 / QM 7333) (Penicillium marneffei).